The chain runs to 306 residues: ADP,ATP carrier protein ER-ANT1 (306 aa).

Solcar repeat units lie at residues 8–101, 113–205, and 213–299; these read ERFS…FKNL, KWFA…IKPI, and GNFL…LHQI. Helical transmembrane passes span 10-37, 78-102, 111-131, 181-202, and 216-236; these read FSAD…VKLL, QANV…KNLL, YLKW…TTSL, FGVS…YDTI, and LASF…AYPF. ADP-binding residues include arginine 83 and lysine 95. Arginine 240 contributes to the ADP binding site. Positions 240 to 245 are important for transport activity; the sequence is RRRMML. The short motif at 240 to 245 is the Nucleotide carrier signature motif element; it reads RRRMML. Residues 276 to 296 traverse the membrane as a helical segment; it reads VTANMLLGVAGAGVLAGYDQL.

The protein belongs to the mitochondrial carrier (TC 2.A.29) family.

It localises to the endoplasmic reticulum membrane. It carries out the reaction ADP(in) + ATP(out) = ADP(out) + ATP(in). Its function is as follows. ADP:ATP antiporter that catalyzes the exchange of ADP and ATP across the endoplasmic reticulum membrane. The polypeptide is ADP,ATP carrier protein ER-ANT1 (ER-ANT1) (Arabidopsis thaliana (Mouse-ear cress)).